The following is a 130-amino-acid chain: Small ribosomal subunit protein uS8 (130 aa).

The protein belongs to the universal ribosomal protein uS8 family. As to quaternary structure, part of the 30S ribosomal subunit.

Functionally, one of the primary rRNA binding proteins, it binds directly to 16S rRNA central domain where it helps coordinate assembly of the platform of the 30S subunit. This chain is Small ribosomal subunit protein uS8, found in Pyrobaculum islandicum (strain DSM 4184 / JCM 9189 / GEO3).